The chain runs to 340 residues: Dihydroorotate dehydrogenase (quinone) (340 aa).

FMN is bound by residues 61–65 and Thr-85; that span reads AGLDK. A substrate-binding site is contributed by Lys-65. 110–114 provides a ligand contact to substrate; the sequence is NRMGF. Asn-138 and Asn-171 together coordinate FMN. Asn-171 lines the substrate pocket. The Nucleophile role is filled by Ser-174. A substrate-binding site is contributed by Asn-176. Positions 216 and 244 each coordinate FMN. Residue 245 to 246 coordinates substrate; that stretch reads NT. Residues Gly-267, Gly-296, and 317-318 contribute to the FMN site; that span reads YT.

This sequence belongs to the dihydroorotate dehydrogenase family. Type 2 subfamily. Monomer. The cofactor is FMN.

It localises to the cell membrane. It catalyses the reaction (S)-dihydroorotate + a quinone = orotate + a quinol. Its pathway is pyrimidine metabolism; UMP biosynthesis via de novo pathway; orotate from (S)-dihydroorotate (quinone route): step 1/1. Its function is as follows. Catalyzes the conversion of dihydroorotate to orotate with quinone as electron acceptor. The polypeptide is Dihydroorotate dehydrogenase (quinone) (Marinobacter nauticus (strain ATCC 700491 / DSM 11845 / VT8) (Marinobacter aquaeolei)).